Consider the following 252-residue polypeptide: NADP-dependent (R)-specific alcohol dehydrogenase (252 aa).

NADP(+) is bound by residues 16 to 19 (TLGI), 39 to 40 (RH), 63 to 64 (DA), N90, Y156, K160, and 191 to 195 (IKTPL). The active-site Proton donor/acceptor is the Y156. Q252 contacts Mg(2+).

This sequence belongs to the short-chain dehydrogenases/reductases (SDR) family. In terms of assembly, homotetramer. The cofactor is Mg(2+).

It catalyses the reaction a secondary alcohol + NADP(+) = a ketone + NADPH + H(+). The enzyme catalyses acetophenone + NADPH + H(+) = (R)-1-phenylethanol + NADP(+). The catalysed reaction is 2,5-hexanedione + 2 NADPH + 2 H(+) = (2R,5R)-hexanediol + 2 NADP(+). It carries out the reaction ethyl 3-oxobutanoate + NADPH + H(+) = ethyl (R)-3-hydroxybutanoate + NADP(+). It catalyses the reaction 2-octanone + NADPH + H(+) = (2R)-octan-2-ol + NADP(+). Its function is as follows. NADP-dependent (R)-specific alcohol dehydrogenase (ADH) with a broad substrate specificity, able to catalyze in vitro the stereoselective reduction of several aliphatic and aromatic ketones as well as beta-keto esters to the corresponding enantiomerically pure alcohols. The chain is NADP-dependent (R)-specific alcohol dehydrogenase from Lentilactobacillus kefiri (Lactobacillus kefiri).